Here is a 1278-residue protein sequence, read N- to C-terminus: Cytoplasmic FMR1-interacting protein 2 (1278 aa).

Lysine 1062 is modified (N6-acetyllysine).

The protein belongs to the CYFIP family. In terms of assembly, component of the WAVE1 complex composed of ABI2, CYFIP2, BRK1, NCKAP1 and WASF1/WAVE1. Interacts with FMR1, FXR1 and FXR2. Interacts with FMR1 isoform 6; the interaction occurs in a RNA-dependent manner. Interacts with RAC1 (activated form) which causes the complex to dissociate, releasing activated WASF1. The complex can also be activated by NCK1. Interacts with SHANK3; the interaction mediates the association of SHANK3 with the WAVE1 complex. Interacts with TMEM108 (via N-terminus); the interaction associates TMEM108 with the WAVE1 complex. As to expression, expressed in T-cells. Increased expression is observed in CD4(+) T-lymphocytes from patients with multiple sclerosis (at protein level).

Its subcellular location is the cytoplasm. It localises to the nucleus. The protein resides in the perinuclear region. The protein localises to the synapse. It is found in the synaptosome. In terms of biological role, involved in T-cell adhesion and p53/TP53-dependent induction of apoptosis. Does not bind RNA. As component of the WAVE1 complex, required for BDNF-NTRK2 endocytic trafficking and signaling from early endosomes. The protein is Cytoplasmic FMR1-interacting protein 2 of Homo sapiens (Human).